We begin with the raw amino-acid sequence, 1224 residues long: Probable serine/threonine-protein kinase DDB_G0292350 (1224 aa).

2 disordered regions span residues 57–98 (MSGS…STQR) and 252–284 (SSPSSSSSSIKTKNTTSTTTTTTTTKNLNDISN). Composition is skewed to low complexity over residues 58–74 (SGSIQSDLSSSDNFTSS) and 83–95 (SSSNTSNRNSDNS). Coiled-coil stretches lie at residues 352–381 (LFKQQEKQHQQQQQQQQNQQDKEKFEKQNN) and 540–569 (DVQLSTKLNDEEETIEKEEEDLNSVDEYLT). 2 disordered regions span residues 693-784 (QPIP…FVIT) and 815-836 (FTNNNNNNNGGSTITTTTTNNI). A compositionally biased stretch (low complexity) spans 743 to 768 (NNNNNNNNNINNNNINNNNINNNKNG). Polar residues predominate over residues 772–784 (GETPSPSSSFVIT). The region spanning 935–1193 (FRDKIKLGTG…PEMLLHHTFL (259 aa)) is the Protein kinase domain. Residues 941-949 (LGTGAFGNV) and lysine 964 contribute to the ATP site. Catalysis depends on aspartate 1063, which acts as the Proton acceptor.

The protein belongs to the protein kinase superfamily. Ser/Thr protein kinase family. Requires Mg(2+) as cofactor.

The catalysed reaction is L-seryl-[protein] + ATP = O-phospho-L-seryl-[protein] + ADP + H(+). The enzyme catalyses L-threonyl-[protein] + ATP = O-phospho-L-threonyl-[protein] + ADP + H(+). This is Probable serine/threonine-protein kinase DDB_G0292350 from Dictyostelium discoideum (Social amoeba).